A 139-amino-acid chain; its full sequence is Large ribosomal subunit protein uL16 (139 aa).

Residues Met-1–Arg-17 are compositionally biased toward basic residues. The segment at Met-1–Gly-24 is disordered.

The protein belongs to the universal ribosomal protein uL16 family. In terms of assembly, part of the 50S ribosomal subunit.

Binds 23S rRNA and is also seen to make contacts with the A and possibly P site tRNAs. This chain is Large ribosomal subunit protein uL16, found in Clavibacter michiganensis subsp. michiganensis (strain NCPPB 382).